The following is a 32-amino-acid chain: Calcitonin (32 aa).

Cys-1 and Cys-7 are disulfide-bonded. A Proline amide modification is found at Pro-32.

It belongs to the calcitonin family.

Its subcellular location is the secreted. In terms of biological role, calcitonin is a peptide hormone that causes a rapid but short-lived drop in the level of calcium and phosphate in blood by promoting the incorporation of those ions in the bones. Calcitonin function is mediated by the calcitonin receptor/CALCR and the CALCR-RAMP2 (AMYR2) receptor complex. The chain is Calcitonin (CALCA) from Bos taurus (Bovine).